The primary structure comprises 344 residues: Centromere protein L (344 aa).

Ser39 bears the Phosphoserine mark. Thr43 bears the Phosphothreonine mark. The residue at position 53 (Ser53) is a Phosphoserine.

Belongs to the CENP-L/IML3 family. In terms of assembly, component of the CENPA-CAD complex, composed of CENPI, CENPK, CENPL, CENPO, CENPP, CENPQ, CENPR and CENPS. The CENPA-CAD complex interacts with the CENPA-NAC complex, at least composed of CENPA, CENPC, CENPH, CENPM, CENPN, CENPT and CENPU.

Its subcellular location is the nucleus. The protein localises to the chromosome. It is found in the centromere. Component of the CENPA-CAD (nucleosome distal) complex, a complex recruited to centromeres which is involved in assembly of kinetochore proteins, mitotic progression and chromosome segregation. May be involved in incorporation of newly synthesized CENPA into centromeres via its interaction with the CENPA-NAC complex. This chain is Centromere protein L (CENPL), found in Homo sapiens (Human).